The sequence spans 245 residues: Ubiquinone/menaquinone biosynthesis C-methyltransferase UbiE (245 aa).

Residues threonine 71, aspartate 92, and 118–119 (DA) contribute to the S-adenosyl-L-methionine site.

Belongs to the class I-like SAM-binding methyltransferase superfamily. MenG/UbiE family.

It catalyses the reaction a 2-demethylmenaquinol + S-adenosyl-L-methionine = a menaquinol + S-adenosyl-L-homocysteine + H(+). It carries out the reaction a 2-methoxy-6-(all-trans-polyprenyl)benzene-1,4-diol + S-adenosyl-L-methionine = a 5-methoxy-2-methyl-3-(all-trans-polyprenyl)benzene-1,4-diol + S-adenosyl-L-homocysteine + H(+). It participates in quinol/quinone metabolism; menaquinone biosynthesis; menaquinol from 1,4-dihydroxy-2-naphthoate: step 2/2. Its pathway is cofactor biosynthesis; ubiquinone biosynthesis. Methyltransferase required for the conversion of demethylmenaquinol (DMKH2) to menaquinol (MKH2) and the conversion of 2-polyprenyl-6-methoxy-1,4-benzoquinol (DDMQH2) to 2-polyprenyl-3-methyl-6-methoxy-1,4-benzoquinol (DMQH2). This Neisseria meningitidis serogroup B (strain ATCC BAA-335 / MC58) protein is Ubiquinone/menaquinone biosynthesis C-methyltransferase UbiE.